We begin with the raw amino-acid sequence, 567 residues long: Unguisins hydrolase ungD (567 aa).

It belongs to the peptidase S12 family.

Its pathway is secondary metabolite biosynthesis. In terms of biological role, hydrolase; part of the gene cluster that mediates the biosynthesis of the unguisins, gamma-aminobutyric acid (GABA)-containing fungal cyclic heptapeptides with the amino acid sequence cyclo-(D-Ala1-D-Val2-L-Phe3-D-Val4-D-Ala5-D-Trp6-GABA7) for unguisin A and cyclo-(D-Ala1-D-Val2-L-Leu3-D-Val4-D-Ala5-D-Trp6-GABA7) for unguisin B. Within the pathway, the hydrolase ungD catalyzes the hydrolysis between the D-tryptophan and GABA residues of unguisins A and B to produce the corresponding linear peptides. The alanine racemase ungC catalyzes the interconversion of L-alanine and D-alanine, providing the D-alanine which is accepted by the first adenylation domain of the nonribosomal peptide synthetase (NRPS) ungA. UngA is the main enzyme within the cluster which condenses the 7 residues using its respective 7 modules. The terminal condensation domain (Ct) is involved in cyclization with D-alanine and thereby releasing of unguisins A and B. The protein is Unguisins hydrolase ungD of Aspergillus violaceofuscus (strain CBS 115571).